Consider the following 611-residue polypeptide: Zinc metalloproteinase-disintegrin-like ohanin (611 aa).

The N-terminal stretch at 1-20 is a signal peptide; that stretch reads MIQVLLVTICLVVFPYQGSS. Residues 21 to 187 constitute a propeptide that is removed on maturation; the sequence is IILESGKVND…WESDEPIEKI (167 aa). The Peptidase M12B domain maps to 198–393; that stretch reads KYLELYIVAD…DTPQCLINKP (196 aa). Residues N217 and N260 are each glycosylated (N-linked (GlcNAc...) asparagine). Intrachain disulfides connect C307–C388, C347–C372, and C349–C354. H332 contributes to the Zn(2+) binding site. The active site involves E333. Residues H336 and H342 each contribute to the Zn(2+) site. N395 carries N-linked (GlcNAc...) asparagine glycosylation. Residues 401–487 enclose the Disintegrin domain; it reads NAVCGNYVEE…ECPMDRFHKN (87 aa). 14 cysteine pairs are disulfide-bonded: C404/C433, C415/C428, C417/C423, C427/C450, C441/C447, C446/C472, C459/C479, C466/C498, C491/C503, C510/C560, C525/C578, C538/C548, C555/C603, and C597/C608. A D/ECD-tripeptide motif is present at residues 465-467; that stretch reads ECD. N-linked (GlcNAc...) asparagine glycosylation occurs at N528.

The protein belongs to the venom metalloproteinase (M12B) family. P-III subfamily. P-IIIa sub-subfamily. Monomer. Requires Zn(2+) as cofactor. As to expression, expressed by the venom gland.

It is found in the secreted. Its activity is regulated as follows. Inhibited by EDTA, but not by PMSF. Its function is as follows. Snake venom zinc metalloproteinase that has hemorrhagic activity. Inhibits ADP-, TMVA- and stejnulxin-induced platelet aggregation in a dose-dependent manner (on washed platelet, but not on platelet rich plasm). Also specifically degrades alpha-chain of fibrinogen (FGA). This is Zinc metalloproteinase-disintegrin-like ohanin from Ophiophagus hannah (King cobra).